A 430-amino-acid chain; its full sequence is GTPase Obg (430 aa).

Positions 1–158 constitute an Obg domain; that stretch reads MFVDQVKISL…LDVSLELKLL (158 aa). The segment at 118–145 is disordered; it reads KGGRGGRGNSRFATPRNPAPDFSEKGEP. The 171-residue stretch at 159 to 329 folds into the OBG-type G domain; the sequence is ADVGLVGFPS…LLYAIADKLE (171 aa). GTP contacts are provided by residues 165 to 172, 190 to 194, 212 to 215, 282 to 285, and 310 to 312; these read GFPSVGKS, FTTIK, DLPG, NKMD, and STI. Mg(2+) contacts are provided by Ser-172 and Thr-192. Residues 352–430 form the OCT domain; it reads KHTPSQDKFT…ILGGEFEFVE (79 aa).

Belongs to the TRAFAC class OBG-HflX-like GTPase superfamily. OBG GTPase family. As to quaternary structure, monomer. Mg(2+) is required as a cofactor.

The protein localises to the cytoplasm. In terms of biological role, an essential GTPase which binds GTP, GDP and possibly (p)ppGpp with moderate affinity, with high nucleotide exchange rates and a fairly low GTP hydrolysis rate. Plays a role in control of the cell cycle, stress response, ribosome biogenesis and in those bacteria that undergo differentiation, in morphogenesis control. The sequence is that of GTPase Obg from Staphylococcus aureus (strain MRSA252).